Reading from the N-terminus, the 80-residue chain is Acyl carrier protein (80 aa).

The region spanning 4-79 is the Carrier domain; the sequence is EEIKDKVFDI…QAIDYIVNAK (76 aa). Serine 39 bears the O-(pantetheine 4'-phosphoryl)serine mark.

The protein belongs to the acyl carrier protein (ACP) family. In terms of processing, 4'-phosphopantetheine is transferred from CoA to a specific serine of apo-ACP by AcpS. This modification is essential for activity because fatty acids are bound in thioester linkage to the sulfhydryl of the prosthetic group.

The protein resides in the cytoplasm. It participates in lipid metabolism; fatty acid biosynthesis. Its function is as follows. Carrier of the growing fatty acid chain in fatty acid biosynthesis. The polypeptide is Acyl carrier protein (Prosthecochloris aestuarii (strain DSM 271 / SK 413)).